The chain runs to 216 residues: Protein-L-isoaspartate O-methyltransferase (216 aa).

S61 is an active-site residue.

It belongs to the methyltransferase superfamily. L-isoaspartyl/D-aspartyl protein methyltransferase family.

It is found in the cytoplasm. The catalysed reaction is [protein]-L-isoaspartate + S-adenosyl-L-methionine = [protein]-L-isoaspartate alpha-methyl ester + S-adenosyl-L-homocysteine. Functionally, catalyzes the methyl esterification of L-isoaspartyl residues in peptides and proteins that result from spontaneous decomposition of normal L-aspartyl and L-asparaginyl residues. It plays a role in the repair and/or degradation of damaged proteins. This Pyrococcus abyssi (strain GE5 / Orsay) protein is Protein-L-isoaspartate O-methyltransferase (pcm).